The sequence spans 195 residues: UPF0301 protein CCNA_03506 (195 aa).

The protein belongs to the UPF0301 (AlgH) family.

The protein is UPF0301 protein CCNA_03506 of Caulobacter vibrioides (strain NA1000 / CB15N) (Caulobacter crescentus).